A 127-amino-acid polypeptide reads, in one-letter code: PRA1 family protein C (127 aa).

The next 3 helical transmembrane spans lie at 15-35 (IFISMLWQPVHLSVFVILIVA), 53-73 (VIDDSTLVLVLLVLTIGIFLL), and 76-96 (VSRGIVIGVLAGLPVVLVHGM).

It belongs to the PRA1 family.

It localises to the endoplasmic reticulum membrane. Functionally, may be involved in both secretory and endocytic intracellular trafficking in the endosomal/prevacuolar compartments. In Arabidopsis thaliana (Mouse-ear cress), this protein is PRA1 family protein C (PRA1C).